The following is a 501-amino-acid chain: Uridine kinase (501 aa).

At serine 17 the chain carries Phosphoserine. Residue 63–70 (GASGSGKT) participates in ATP binding. Serine 276 carries the post-translational modification Phosphoserine.

Belongs to the uridine kinase family.

Its subcellular location is the cytoplasm. It is found in the nucleus. The enzyme catalyses uridine + ATP = UMP + ADP + H(+). It carries out the reaction cytidine + ATP = CMP + ADP + H(+). The protein operates within pyrimidine metabolism; CTP biosynthesis via salvage pathway; CTP from cytidine: step 1/3. It functions in the pathway pyrimidine metabolism; UMP biosynthesis via salvage pathway; UMP from uridine: step 1/1. Functionally, catalyzes the conversion of uridine into UMP and cytidine into CMP in the pyrimidine salvage pathway. The polypeptide is Uridine kinase (URK1) (Saccharomyces cerevisiae (strain ATCC 204508 / S288c) (Baker's yeast)).